The primary structure comprises 386 residues: DNA-directed RNA polymerase subunit Rpo1C (386 aa).

This sequence belongs to the RNA polymerase beta' chain family. As to quaternary structure, part of the RNA polymerase complex.

Its subcellular location is the cytoplasm. It carries out the reaction RNA(n) + a ribonucleoside 5'-triphosphate = RNA(n+1) + diphosphate. DNA-dependent RNA polymerase (RNAP) catalyzes the transcription of DNA into RNA using the four ribonucleoside triphosphates as substrates. Forms part of the jaw domain. This is DNA-directed RNA polymerase subunit Rpo1C from Methanococcus maripaludis (strain C5 / ATCC BAA-1333).